A 425-amino-acid chain; its full sequence is Monoacylglycerol lipase ABHD2 (425 aa).

Topologically, residues 1–9 are cytoplasmic; it reads MNAMLETPE. A helical; Signal-anchor for type II membrane protein transmembrane segment spans residues 10–30; that stretch reads LPAVFDGVKLAAVAAVLYVIV. Residues 31 to 425 are Extracellular-facing; the sequence is RCLNLKSPTA…DTEQVEADLE (395 aa). The AB hydrolase-1 domain maps to 128-382; sequence MVICPGIANH…HGGHLGFFEG (255 aa). N-linked (GlcNAc...) asparagine glycosylation occurs at N136. Residue S207 is the Nucleophile of the active site. Active-site charge relay system residues include D345 and H376. N410 carries an N-linked (GlcNAc...) asparagine glycan.

This sequence belongs to the AB hydrolase superfamily. AB hydrolase 4 family.

The protein resides in the cell membrane. It catalyses the reaction Hydrolyzes glycerol monoesters of long-chain fatty acids.. The catalysed reaction is an acetyl ester + H2O = an aliphatic alcohol + acetate + H(+). The enzyme catalyses a triacylglycerol + H2O = a diacylglycerol + a fatty acid + H(+). It carries out the reaction 2-(5Z,8Z,11Z,14Z-eicosatetraenoyl)-glycerol + H2O = glycerol + (5Z,8Z,11Z,14Z)-eicosatetraenoate + H(+). It catalyses the reaction a butanoate ester + H2O = an aliphatic alcohol + butanoate + H(+). The catalysed reaction is hexadecanoate ester + H2O = an aliphatic alcohol + hexadecanoate + H(+). With respect to regulation, acylglycerol lipase activity is activated upon binding to progesterone. Progesterone-dependent acylglycerol lipase that catalyzes hydrolysis of endocannabinoid arachidonoylglycerol (AG) from cell membrane. Acts as a progesterone receptor: progesterone-binding activates the acylglycerol lipase activity, mediating degradation of 1-arachidonoylglycerol (1AG) and 2-arachidonoylglycerol (2AG) to glycerol and arachidonic acid (AA). Also displays an ester hydrolase activity against acetyl ester, butanoate ester and hexadecanoate ester. Plays a key role in sperm capacitation in response to progesterone by mediating degradation of 2AG, an inhibitor of the sperm calcium channel CatSper, leading to calcium influx via CatSper and sperm activation. May also play a role in smooth muscle cells migration. In Macaca fascicularis (Crab-eating macaque), this protein is Monoacylglycerol lipase ABHD2 (ABHD2).